The sequence spans 493 residues: Phospholipid transfer protein (493 aa).

The first 17 residues, 1 to 17, serve as a signal peptide directing secretion; the sequence is MALFGALFLALLAGAHA. The N-linked (GlcNAc...) (complex) asparagine glycan is linked to asparagine 64. Asparagine 94 carries N-linked (GlcNAc...) asparagine glycosylation. N-linked (GlcNAc...) (complex) asparagine glycosylation occurs at asparagine 117. Residue asparagine 143 is glycosylated (N-linked (GlcNAc...) asparagine). Residues cysteine 146 and cysteine 185 are joined by a disulfide bond. A glycan (N-linked (GlcNAc...) (complex) asparagine) is linked at asparagine 245. Asparagine 398 carries an N-linked (GlcNAc...) asparagine glycan.

It belongs to the BPI/LBP/Plunc superfamily. BPI/LBP family. Glycosylation is necessary for secretion and its phospholipid transfer activity. Widely expressed. Highest level of expression in the ovary, thymus and placenta, with moderate levels found in the pancreas, small intestine, testis, lung and prostrate. Low level expression in the kidney, liver and spleen, with very low levels found in the heart, colon, skeletal muscle, leukocytes and brain. Expressed in the cortical neurons.

Its subcellular location is the secreted. It is found in the nucleus. The enzyme catalyses a 1,2-diacyl-sn-glycero-3-phosphocholine(in) = a 1,2-diacyl-sn-glycero-3-phosphocholine(out). It catalyses the reaction a 1,2-diacyl-sn-glycero-3-phosphoethanolamine(in) = a 1,2-diacyl-sn-glycero-3-phosphoethanolamine(out). It carries out the reaction a 1,2-diacyl-sn-glycerol(in) = a 1,2-diacyl-sn-glycerol(out). The catalysed reaction is a 1,2-diacyl-sn-glycero-3-phosphate(in) = a 1,2-diacyl-sn-glycero-3-phosphate(out). The enzyme catalyses a sphingomyelin(in) = a sphingomyelin(out). It catalyses the reaction a 1,2-diacyl-sn-glycero-3-phospho-(1'-sn-glycerol)(in) = a 1,2-diacyl-sn-glycero-3-phospho-(1'-sn-glycerol)(out). It carries out the reaction a 1,2-diacyl-sn-glycero-3-phospho-(1D-myo-inositol)(in) = a 1,2-diacyl-sn-glycero-3-phospho-(1D-myo-inositol)(out). The catalysed reaction is 1-hexadecanoyl-2-(5Z,8Z,11Z,14Z-eicosatetraenoyl)-sn-glycero-3-phosphoethanolamine(in) = 1-hexadecanoyl-2-(5Z,8Z,11Z,14Z-eicosatetraenoyl)-sn-glycero-3-phosphoethanolamine(out). The enzyme catalyses N-(hexadecanoyl)-sphing-4-enine-1-phosphocholine(in) = N-(hexadecanoyl)-sphing-4-enine-1-phosphocholine(out). It catalyses the reaction 1,2-dihexadecanoyl-sn-glycero-3-phosphocholine(in) = 1,2-dihexadecanoyl-sn-glycero-3-phosphocholine(out). Its function is as follows. Mediates the transfer of phospholipids and free cholesterol from triglyceride-rich lipoproteins (low density lipoproteins or LDL and very low density lipoproteins or VLDL) into high-density lipoproteins (HDL) as well as the exchange of phospholipids between triglyceride-rich lipoproteins themselves. Facilitates the transfer of a spectrum of different lipid molecules, including diacylglycerol, phosphatidic acid, sphingomyelin, phosphatidylcholine, phosphatidylinositol, phosphatidylglycerol, cerebroside and phosphatidyl ethanolamine. Plays an important role in HDL remodeling which involves modulating the size and composition of HDL. Also plays a key role in the uptake of cholesterol from peripheral cells and tissues that is subsequently transported to the liver for degradation and excretion. Two distinct forms of PLTP exist in plasma: an active form that can transfer phosphatidylcholine from phospholipid vesicles to HDL, and an inactive form that lacks this capability. In Homo sapiens (Human), this protein is Phospholipid transfer protein (PLTP).